The following is a 223-amino-acid chain: Cytidylate kinase (223 aa).

Position 10-18 (Gly-10–Thr-18) interacts with ATP.

The protein belongs to the cytidylate kinase family. Type 1 subfamily.

Its subcellular location is the cytoplasm. The catalysed reaction is CMP + ATP = CDP + ADP. It carries out the reaction dCMP + ATP = dCDP + ADP. This is Cytidylate kinase from Streptococcus pneumoniae (strain Taiwan19F-14).